The sequence spans 471 residues: Sulfate adenylyltransferase subunit 1 (471 aa).

The tr-type G domain maps to 24–240; it reads KSLLRFLTCG…ESADVERELE (217 aa). The segment at 33–40 is G1; sequence GSVDDGKS. 33–40 contacts GTP; the sequence is GSVDDGKS. The interval 91–95 is G2; the sequence is GITID. The G3 stretch occupies residues 112 to 115; sequence DTPG. GTP-binding positions include 112–116 and 167–170; these read DTPGH and NKMD. Residues 167-170 are G4; sequence NKMD. The segment at 204-206 is G5; sequence SAL.

It belongs to the TRAFAC class translation factor GTPase superfamily. Classic translation factor GTPase family. CysN/NodQ subfamily. In terms of assembly, heterodimer composed of CysD, the smaller subunit, and CysN.

The enzyme catalyses sulfate + ATP + H(+) = adenosine 5'-phosphosulfate + diphosphate. It functions in the pathway sulfur metabolism; hydrogen sulfide biosynthesis; sulfite from sulfate: step 1/3. Its function is as follows. With CysD forms the ATP sulfurylase (ATPS) that catalyzes the adenylation of sulfate producing adenosine 5'-phosphosulfate (APS) and diphosphate, the first enzymatic step in sulfur assimilation pathway. APS synthesis involves the formation of a high-energy phosphoric-sulfuric acid anhydride bond driven by GTP hydrolysis by CysN coupled to ATP hydrolysis by CysD. The protein is Sulfate adenylyltransferase subunit 1 of Aeromonas salmonicida (strain A449).